Here is a 207-residue protein sequence, read N- to C-terminus: Dephospho-CoA kinase (207 aa).

In terms of domain architecture, DPCK spans 10–207 (TLGLTGGIGS…FYLTLRGGQS (198 aa)). 18–23 (GSGKSA) is a binding site for ATP.

This sequence belongs to the CoaE family.

The protein localises to the cytoplasm. It catalyses the reaction 3'-dephospho-CoA + ATP = ADP + CoA + H(+). Its pathway is cofactor biosynthesis; coenzyme A biosynthesis; CoA from (R)-pantothenate: step 5/5. Catalyzes the phosphorylation of the 3'-hydroxyl group of dephosphocoenzyme A to form coenzyme A. This Pseudomonas fluorescens (strain ATCC BAA-477 / NRRL B-23932 / Pf-5) protein is Dephospho-CoA kinase.